Here is a 485-residue protein sequence, read N- to C-terminus: Aspartyl/glutamyl-tRNA(Asn/Gln) amidotransferase subunit B (485 aa).

The protein belongs to the GatB/GatE family. GatB subfamily. Heterotrimer of A, B and C subunits.

The catalysed reaction is L-glutamyl-tRNA(Gln) + L-glutamine + ATP + H2O = L-glutaminyl-tRNA(Gln) + L-glutamate + ADP + phosphate + H(+). The enzyme catalyses L-aspartyl-tRNA(Asn) + L-glutamine + ATP + H2O = L-asparaginyl-tRNA(Asn) + L-glutamate + ADP + phosphate + 2 H(+). Allows the formation of correctly charged Asn-tRNA(Asn) or Gln-tRNA(Gln) through the transamidation of misacylated Asp-tRNA(Asn) or Glu-tRNA(Gln) in organisms which lack either or both of asparaginyl-tRNA or glutaminyl-tRNA synthetases. The reaction takes place in the presence of glutamine and ATP through an activated phospho-Asp-tRNA(Asn) or phospho-Glu-tRNA(Gln). The chain is Aspartyl/glutamyl-tRNA(Asn/Gln) amidotransferase subunit B from Bordetella avium (strain 197N).